A 490-amino-acid chain; its full sequence is Acetyl-coenzyme A carboxylase carboxyl transferase subunit beta, chloroplastic (490 aa).

One can recognise a CoA carboxyltransferase N-terminal domain in the interval 221 to 490 (LWVQCENCYG…PLNQKSSKIK (270 aa)). Zn(2+) is bound by residues Cys225, Cys228, Cys244, and Cys247. The C4-type zinc finger occupies 225 to 247 (CENCYGLNYKKFLKSKMNICEQC).

Belongs to the AccD/PCCB family. Acetyl-CoA carboxylase is a heterohexamer composed of biotin carboxyl carrier protein, biotin carboxylase and 2 subunits each of ACCase subunit alpha and ACCase plastid-coded subunit beta (accD). Zn(2+) is required as a cofactor. In terms of tissue distribution, expressed in leaves, ripening and mature fruit.

It is found in the plastid. The protein resides in the chloroplast stroma. The protein localises to the chromoplast stroma. The catalysed reaction is N(6)-carboxybiotinyl-L-lysyl-[protein] + acetyl-CoA = N(6)-biotinyl-L-lysyl-[protein] + malonyl-CoA. It functions in the pathway lipid metabolism; malonyl-CoA biosynthesis; malonyl-CoA from acetyl-CoA: step 1/1. In terms of biological role, component of the acetyl coenzyme A carboxylase (ACC) complex. Biotin carboxylase (BC) catalyzes the carboxylation of biotin on its carrier protein (BCCP) and then the CO(2) group is transferred by the transcarboxylase to acetyl-CoA to form malonyl-CoA. Is up-regulated upon chromoplast differentiation, presumably for fatty acid biosynthesis. The polypeptide is Acetyl-coenzyme A carboxylase carboxyl transferase subunit beta, chloroplastic (Solanum lycopersicum (Tomato)).